A 202-amino-acid polypeptide reads, in one-letter code: Ribonuclease HII (202 aa).

In terms of domain architecture, RNase H type-2 spans 1 to 195; that stretch reads MIVAGVDEVG…PELKGGSPAG (195 aa). 3 residues coordinate a divalent metal cation: aspartate 7, glutamate 8, and aspartate 103.

The protein belongs to the RNase HII family. Requires Mn(2+) as cofactor. Mg(2+) serves as cofactor.

Its subcellular location is the cytoplasm. It carries out the reaction Endonucleolytic cleavage to 5'-phosphomonoester.. Functionally, endonuclease that specifically degrades the RNA of RNA-DNA hybrids. This chain is Ribonuclease HII, found in Synechococcus sp. (strain RCC307).